The following is a 4307-amino-acid chain: Cytoplasmic dynein 2 heavy chain 1 (4307 aa).

Residues methionine 1–glutamine 1650 form a stem region. Residue leucine 145–serine 152 coordinates ATP. Residues asparagine 1074–aspartate 1103 adopt a coiled-coil conformation. AAA regions lie at residues tyrosine 1651–glycine 1875, glutamate 1938–aspartate 2161, alanine 2251–glycine 2505, and histidine 2617–lysine 2863. ATP is bound by residues glycine 1689 to threonine 1696, glycine 1979 to serine 1986, glycine 2291 to glycine 2298, and glycine 2655 to arginine 2662. Residues alanine 2881–isoleucine 3169 form a stalk region. Coiled-coil stretches lie at residues leucine 2897–glutamine 2982, leucine 3109–leucine 3200, and isoleucine 3408–glutamate 3442. 2 AAA regions span residues leucine 3244–glutamate 3473 and methionine 3690–arginine 3905.

The protein belongs to the dynein heavy chain family. As to quaternary structure, the cytoplasmic dynein complex 2 is probably composed by a heavy chain DYNC2H1 homodimer and a number of DYNC2LI1 light intermediate chains.

Its subcellular location is the cytoplasm. The protein localises to the cytoskeleton. It is found in the cilium axoneme. The protein resides in the cell membrane. Its function is as follows. May function as a motor for intraflagellar retrograde transport. Functions in cilia biogenesis. May play a role in transport between endoplasmic reticulum and Golgi or organization of the Golgi in cells. This is Cytoplasmic dynein 2 heavy chain 1 (DYNC2H1) from Homo sapiens (Human).